Here is a 280-residue protein sequence, read N- to C-terminus: Acetylglutamate kinase (280 aa).

Residues 57 to 58 (GG), Arg79, and Asn174 contribute to the substrate site.

Belongs to the acetylglutamate kinase family. ArgB subfamily.

Its subcellular location is the cytoplasm. The catalysed reaction is N-acetyl-L-glutamate + ATP = N-acetyl-L-glutamyl 5-phosphate + ADP. It functions in the pathway amino-acid biosynthesis; L-arginine biosynthesis; N(2)-acetyl-L-ornithine from L-glutamate: step 2/4. In terms of biological role, catalyzes the ATP-dependent phosphorylation of N-acetyl-L-glutamate. The protein is Acetylglutamate kinase of Helicobacter hepaticus (strain ATCC 51449 / 3B1).